The sequence spans 136 residues: Nucleoside diphosphate kinase (136 aa).

Residues K10, F58, R86, T92, R104, and N114 each contribute to the ATP site. The active-site Pros-phosphohistidine intermediate is the H117.

This sequence belongs to the NDK family. As to quaternary structure, homotetramer. Requires Mg(2+) as cofactor.

The protein localises to the cytoplasm. It carries out the reaction a 2'-deoxyribonucleoside 5'-diphosphate + ATP = a 2'-deoxyribonucleoside 5'-triphosphate + ADP. The enzyme catalyses a ribonucleoside 5'-diphosphate + ATP = a ribonucleoside 5'-triphosphate + ADP. Its function is as follows. Major role in the synthesis of nucleoside triphosphates other than ATP. The ATP gamma phosphate is transferred to the NDP beta phosphate via a ping-pong mechanism, using a phosphorylated active-site intermediate. This is Nucleoside diphosphate kinase from Corynebacterium diphtheriae (strain ATCC 700971 / NCTC 13129 / Biotype gravis).